A 247-amino-acid chain; its full sequence is Type III pantothenate kinase (247 aa).

6–13 (DVGNTSIY) is an ATP binding site. Residue 102 to 105 (GADL) coordinates substrate. The active-site Proton acceptor is Asp-104. A K(+)-binding site is contributed by Asp-122. Thr-125 is an ATP binding site. Residue Thr-176 coordinates substrate.

This sequence belongs to the type III pantothenate kinase family. As to quaternary structure, homodimer. NH4(+) is required as a cofactor. Requires K(+) as cofactor.

It is found in the cytoplasm. It catalyses the reaction (R)-pantothenate + ATP = (R)-4'-phosphopantothenate + ADP + H(+). It functions in the pathway cofactor biosynthesis; coenzyme A biosynthesis; CoA from (R)-pantothenate: step 1/5. Functionally, catalyzes the phosphorylation of pantothenate (Pan), the first step in CoA biosynthesis. The sequence is that of Type III pantothenate kinase from Acholeplasma laidlawii (strain PG-8A).